The chain runs to 133 residues: Aspartate 1-decarboxylase (133 aa).

The active-site Schiff-base intermediate with substrate; via pyruvic acid is the Ser26. Ser26 carries the post-translational modification Pyruvic acid (Ser). Thr58 is a binding site for substrate. The active-site Proton donor is the Tyr59. 74 to 76 provides a ligand contact to substrate; the sequence is GAA.

Belongs to the PanD family. In terms of assembly, heterooctamer of four alpha and four beta subunits. Pyruvate is required as a cofactor. In terms of processing, is synthesized initially as an inactive proenzyme, which is activated by self-cleavage at a specific serine bond to produce a beta-subunit with a hydroxyl group at its C-terminus and an alpha-subunit with a pyruvoyl group at its N-terminus.

The protein localises to the cytoplasm. It carries out the reaction L-aspartate + H(+) = beta-alanine + CO2. The protein operates within cofactor biosynthesis; (R)-pantothenate biosynthesis; beta-alanine from L-aspartate: step 1/1. In terms of biological role, catalyzes the pyruvoyl-dependent decarboxylation of aspartate to produce beta-alanine. The polypeptide is Aspartate 1-decarboxylase (Legionella pneumophila (strain Paris)).